The primary structure comprises 237 residues: UPF0502 protein RB6530 (237 aa).

Positions 187 to 202 (ASSAAPSQAESGSTSP) are enriched in polar residues. Residues 187 to 211 (ASSAAPSQAESGSTSPAKAANDDRI) are disordered.

Belongs to the UPF0502 family.

The protein is UPF0502 protein RB6530 of Rhodopirellula baltica (strain DSM 10527 / NCIMB 13988 / SH1).